The chain runs to 120 residues: Ribosome-binding factor A (120 aa).

Belongs to the RbfA family. In terms of assembly, monomer. Binds 30S ribosomal subunits, but not 50S ribosomal subunits or 70S ribosomes.

The protein localises to the cytoplasm. In terms of biological role, one of several proteins that assist in the late maturation steps of the functional core of the 30S ribosomal subunit. Associates with free 30S ribosomal subunits (but not with 30S subunits that are part of 70S ribosomes or polysomes). Required for efficient processing of 16S rRNA. May interact with the 5'-terminal helix region of 16S rRNA. The sequence is that of Ribosome-binding factor A from Lactobacillus delbrueckii subsp. bulgaricus (strain ATCC 11842 / DSM 20081 / BCRC 10696 / JCM 1002 / NBRC 13953 / NCIMB 11778 / NCTC 12712 / WDCM 00102 / Lb 14).